The primary structure comprises 219 residues: Cytidylate kinase (219 aa).

Gly-21–Thr-29 contributes to the ATP binding site.

This sequence belongs to the cytidylate kinase family. Type 1 subfamily.

It is found in the cytoplasm. It carries out the reaction CMP + ATP = CDP + ADP. It catalyses the reaction dCMP + ATP = dCDP + ADP. In Rickettsia rickettsii (strain Iowa), this protein is Cytidylate kinase.